The following is a 323-amino-acid chain: Serine/threonine-protein phosphatase PP1-gamma catalytic subunit (323 aa).

Ala2 is modified (N-acetylalanine). 4 residues coordinate Mn(2+): Asp64, His66, Asp92, and Asn124. The Proton donor role is filled by His125. Residues His173 and His248 each coordinate Mn(2+). The interval Lys302 to Lys323 is disordered. Phosphothreonine occurs at positions 307 and 311.

It belongs to the PPP phosphatase family. PP-1 subfamily. As to quaternary structure, PP1 comprises a catalytic subunit, PPP1CA, PPP1CB or PPP1CC, which is folded into its native form by inhibitor 2 and glycogen synthetase kinase 3, and then complexed to one or several targeting or regulatory subunits. PPP1R12A, PPP1R12B and PPP1R12C mediate binding to myosin. PPP1R3A (in skeletal muscle), PPP1R3B (in liver), PPP1R3C, PPP1R3D and PPP1R3F (in brain) mediate binding to glycogen. Interacts with cyanobacterial toxin microcystin; disulfide-linked. Interacts with PPP1R3B and PPP1R7. Isoform 2 interacts with SPZ1. Interacts with CDCA2. PPP1R15A and PPP1R15B mediate binding to EIF2S1. Part of a complex containing PPP1R15B, PP1 and NCK1/2. Interacts with IKFZ1; the interaction targets PPP1CC to pericentromeric heterochromatin, dephosphorylates IKAROS, stabilizes it and prevents it from degradation. Interacts with PPP1R42; the interaction is direct. Interacts with NOM1 and PPP1R8. Component of the PTW/PP1 phosphatase complex, composed of PPP1R10/PNUTS, TOX4, WDR82, and PPP1CA or PPP1CB or PPP1CC. Interacts with PPP1R8. Interacts with isoform 1 and isoform 4 NEK2. Interacts with URI1; the interaction is phosphorylation-dependent and occurs in a growth factor-dependent manner. Interacts with FOXP3. Interacts with TMEM225 (via RVxF motif). Interacts with MKI67. Interacts with RRP1B; this targets PPP1CC to the nucleolus. Interacts with PPP1R2B. Found in a complex with PPP1CA, PPP1CC, SHC1 and PEAK1. Interacts with DYNLT4. Interacts (via RVxF motif) with FIRRM; regulates PLK1 kinase activity. Interacts with the KNL1 complex subunit KNL1; the interaction is direct and mutually exclusive with KNL1 binding to microtubules. Component of the SHOC2-MRAS-PP1c (SMP) complex consisting of SHOC2, GTP-bound M-Ras/MRAS and the catalytic subunit of protein phosphatase 1 (either PPP1CA, PPP1CB or PPP1CC). SHOC2 and PP1c preferably bind M-Ras/MRAS, but they also bind K-Ras/KRAS, N-Ras/NRAS and H-Ras/HRAS; these interactions are GTP-dependent and both SHOC2 and PP1c are required to form a stable complex. Interacts with SHOC2 in the absence of Ras GTPases. The cofactor is Mn(2+). Phosphorylated by NEK2.

It is found in the cytoplasm. The protein resides in the nucleus. The protein localises to the nucleolus. Its subcellular location is the nucleoplasm. It localises to the nucleus speckle. It is found in the chromosome. The protein resides in the centromere. The protein localises to the kinetochore. Its subcellular location is the cleavage furrow. It localises to the midbody. It is found in the mitochondrion. The protein resides in the cytoskeleton. The protein localises to the microtubule organizing center. It carries out the reaction O-phospho-L-seryl-[protein] + H2O = L-seryl-[protein] + phosphate. The catalysed reaction is O-phospho-L-threonyl-[protein] + H2O = L-threonyl-[protein] + phosphate. Inactivated by binding to URI1. The phosphatase activity of the PPP1R15A-PP1 complex toward EIF2S1 is specifically inhibited by Salubrinal, a drug that protects cells from endoplasmic reticulum stress. In terms of biological role, protein phosphatase that associates with over 200 regulatory proteins to form highly specific holoenzymes which dephosphorylate hundreds of biological targets. Protein phosphatase 1 (PP1) is essential for cell division, and participates in the regulation of glycogen metabolism, muscle contractility and protein synthesis. Dephosphorylates RPS6KB1. Involved in regulation of ionic conductances and long-term synaptic plasticity. May play an important role in dephosphorylating substrates such as the postsynaptic density-associated Ca(2+)/calmodulin dependent protein kinase II. Component of the PTW/PP1 phosphatase complex, which plays a role in the control of chromatin structure and cell cycle progression during the transition from mitosis into interphase. In balance with CSNK1D and CSNK1E, determines the circadian period length, through the regulation of the speed and rhythmicity of PER1 and PER2 phosphorylation. May dephosphorylate CSNK1D and CSNK1E. Regulates the recruitment of the SKA complex to kinetochores. Dephosphorylates the 'Ser-418' residue of FOXP3 in regulatory T-cells (Treg) from patients with rheumatoid arthritis, thereby inactivating FOXP3 and rendering Treg cells functionally defective. Together with PPP1CA (PP1-alpha subunit), dephosphorylates IFIH1/MDA5 and RIG-I leading to their activation and a functional innate immune response. Core component of the SHOC2-MRAS-PP1c (SMP) holophosphatase complex that regulates the MAPK pathway activation. The SMP complex specifically dephosphorylates the inhibitory phosphorylation at 'Ser-259' of RAF1 kinase, 'Ser-365' of BRAF kinase and 'Ser-214' of ARAF kinase, stimulating their kinase activities. Dephosphorylates MKI67 at the onset of anaphase. The SMP complex enhances the dephosphorylation activity and substrate specificity of PP1c. This is Serine/threonine-protein phosphatase PP1-gamma catalytic subunit (PPP1CC) from Homo sapiens (Human).